Here is a 381-residue protein sequence, read N- to C-terminus: Transcription termination factor 4, mitochondrial (381 aa).

The transit peptide at 1 to 42 directs the protein to the mitochondrion; sequence MAAFGRQVLDWHRLIPLTWACMARQTPHLGEQRRTTASLLRK. 5 MTERF repeats span residues 142–172, 177–204, 209–239, 245–270, and 290–318; these read CVVL…LGLG, KRVL…LKEK, VQQV…YAYF, HPDI…YLER, and LKDI…VFKK. The interval 310 to 327 is dimerization with NSUN4; it reads VEEFQVFKKLLAREEEES. The disordered stretch occupies residues 322–381; it reads REEEESESSTSDDKRASLDEDEDDDDEEDNDEDDNDEDDDDEDDDEAEDNDEDEDDDEEE. Residues 340–381 show a composition bias toward acidic residues; the sequence is DEDEDDDDEEDNDEDDNDEDDDDEDDDEAEDNDEDEDDDEEE.

It belongs to the mTERF family. In terms of assembly, heterodimer with NSUN4; this interaction may be required for NSUN4 recruitment to the mitochondrial large ribosomal subunit. In terms of processing, the mature mitochondrial protein exists in 2 forms differing at the level of their N-terminus, one is starting at residue 43 and the other at residue 48.

Its subcellular location is the mitochondrion. Functionally, regulator of mitochondrial ribosome biogenesis and translation. Binds to mitochondrial ribosomal RNAs 16S, 12S and 7S and targets NSUN4 RNA methyltransferase to the mitochondrial large ribosomal subunit (39S). This chain is Transcription termination factor 4, mitochondrial (MTERF4), found in Homo sapiens (Human).